Here is a 338-residue protein sequence, read N- to C-terminus: Ketol-acid reductoisomerase (NADP(+)) (338 aa).

Positions 1–181 (MQVYYDKDAD…GGGRAGVIET (181 aa)) constitute a KARI N-terminal Rossmann domain. Residues 24–27 (YGSQ), Arg47, Ser50, Ser52, and 82–85 (DEHQ) contribute to the NADP(+) site. The active site involves His107. Gly133 provides a ligand contact to NADP(+). In terms of domain architecture, KARI C-terminal knotted spans 182–327 (SFREETETDL…ERLRGMMPWI (146 aa)). Mg(2+)-binding residues include Asp190, Glu194, Glu226, and Glu230. Ser251 is a binding site for substrate.

Belongs to the ketol-acid reductoisomerase family. The cofactor is Mg(2+).

The catalysed reaction is (2R)-2,3-dihydroxy-3-methylbutanoate + NADP(+) = (2S)-2-acetolactate + NADPH + H(+). It catalyses the reaction (2R,3R)-2,3-dihydroxy-3-methylpentanoate + NADP(+) = (S)-2-ethyl-2-hydroxy-3-oxobutanoate + NADPH + H(+). Its pathway is amino-acid biosynthesis; L-isoleucine biosynthesis; L-isoleucine from 2-oxobutanoate: step 2/4. It functions in the pathway amino-acid biosynthesis; L-valine biosynthesis; L-valine from pyruvate: step 2/4. Its function is as follows. Involved in the biosynthesis of branched-chain amino acids (BCAA). Catalyzes an alkyl-migration followed by a ketol-acid reduction of (S)-2-acetolactate (S2AL) to yield (R)-2,3-dihydroxy-isovalerate. In the isomerase reaction, S2AL is rearranged via a Mg-dependent methyl migration to produce 3-hydroxy-3-methyl-2-ketobutyrate (HMKB). In the reductase reaction, this 2-ketoacid undergoes a metal-dependent reduction by NADPH to yield (R)-2,3-dihydroxy-isovalerate. This is Ketol-acid reductoisomerase (NADP(+)) from Alkalilimnicola ehrlichii (strain ATCC BAA-1101 / DSM 17681 / MLHE-1).